Reading from the N-terminus, the 872-residue chain is MGSGPIDPKELLKGLDSFLTRDGEVKSVDGIAKIFSLMKEARKMVSRCTYLNIILQTRAPEVLVKFIDVGGYKLLNSWLTYSKTTNNIPLLQQILLTLQHLPLTVDHLKQNNTAKLVKQLSKSSEDEELRKLASVLVSDWMAVIRSQSSTQPAEKDKKKRKEEGKSRTTLPERPLTEVKAETRAEEAPEKKKEKPKSLRTTAPSHAKFRSTGLELDTPSLVPVKKNSSTVVVSDKYNLKPIPLKRQSATAAPGDAAPPAEKKYKPLNTTPNTTKEIKVKIIPPQPMEGLGFLDALNSAPVPGIKIKKKKKVLSPTAAKPSPFEGKTSTEPSTAKPSSPEPAAPAEPMDTDRPGTPVPAVEVPELMDAASSEPGALDAKPVESPGDPNQLTRKGRKRKTVTWPEEGKLREYFYFELDETERVNVNKIKDFGEAAKREILSDRHAFETARRLSHDNMEEKVPWVCPRPLVLPSPLVIPGSNSQERYIQAEREKGILQELFLNKESPHEPDPEPYEPIPPKLIPLDEECAMDETPYVETLEPGGSGGSPDGAGGSKLPPVLANLMGSMGAGKSPQGPGGGGINVQEILTSIMGSPNNHPSEELLKQPDYSDKLKQMLVPHGLLGPGPVANGFPPGGPGGPKGMQHFPPGPGGPMPGPHGGPGGPVGPRLLGPPPPSRGGDPFWDGPGDPMRGGPMRGGPGPGPGPYHRGRGGRGGNEPPPPPPFRGARGGRSGGGPPNGRGGPGGGGMVGGGGHRPHEGPGGSMGSGHRSHEGPGGSMGSGHRSHEGPGHGGPHGHRPHDVPSHRGHDHRGPPPHEHRGHDGHGGGGHRGHDGGHSHGGDMSNRPVCRHFMMKGNCRYENNCAFYHPGVNGPPLP.

Residues 1–348 (MGSGPIDPKE…EPAAPAEPMD (348 aa)) form an interaction with TOX4 region. The 75-residue stretch at 73–147 (KLLNSWLTYS…SDWMAVIRSQ (75 aa)) folds into the TFIIS N-terminal domain. Disordered stretches follow at residues 147–213 (QSST…STGL), 247–270 (SATAAPGDAAPPAEKKYKPLNTTP), 307–398 (KKKK…KRKT), and 534–837 (VETL…HGGD). Basic and acidic residues-rich tracts occupy residues 153-166 (AEKDKKKRKEEGKS) and 174-196 (PLTEVKAETRAEEAPEKKKEKPK). Lys-179 participates in a covalent cross-link: Glycyl lysine isopeptide (Lys-Gly) (interchain with G-Cter in SUMO2). Over residues 248–258 (ATAAPGDAAPP) the composition is skewed to low complexity. A Glycyl lysine isopeptide (Lys-Gly) (interchain with G-Cter in SUMO2) cross-link involves residue Lys-262. Ser-313 is subject to Phosphoserine. Residues 325 to 336 (KTSTEPSTAKPS) are compositionally biased toward low complexity. The segment at 357–433 (PAVEVPELMD…NKIKDFGEAA (77 aa)) is necessary for interaction with PPP1CA. Phosphoserine is present on Ser-382. Positions 393 to 408 (GRKRKTVTWPEEGKLR) are necessary for interaction with PPP1CC. A PP1-binding motif motif is present at residues 394 to 423 (RKRKTVTWPEEGKLREYFYFELDETERVNV). A Phosphothreonine; by PKA modification is found at Thr-398. An interaction with WDR82 region spans residues 418–619 (TERVNVNKIK…LKQMLVPHGL (202 aa)). The segment covering 540–551 (GGSGGSPDGAGG) has biased composition (gly residues). Ser-545 and Ser-591 each carry phosphoserine. A compositionally biased stretch (polar residues) spans 583-595 (EILTSIMGSPNNH). Residues 596 to 611 (PSEELLKQPDYSDKLK) are compositionally biased toward basic and acidic residues. Residues 644–655 (PPGPGGPMPGPH) show a composition bias toward pro residues. Arg-665 bears the Omega-N-methylarginine mark. Over residues 674 to 690 (RGGDPFWDGPGDPMRGG) the composition is skewed to low complexity. 2 positions are modified to omega-N-methylarginine: Arg-693 and Arg-737. Residues 724–762 (ARGGRSGGGPPNGRGGPGGGGMVGGGGHRPHEGPGGSMG) show a composition bias toward gly residues. Basic and acidic residues predominate over residues 795 to 835 (PHDVPSHRGHDHRGPPPHEHRGHDGHGGGGHRGHDGGHSHG). A C3H1-type zinc finger spans residues 838-866 (MSNRPVCRHFMMKGNCRYENNCAFYHPGV).

In terms of assembly, component of the PNUTS-PP1 complex (also named PTW/PP1 complex), composed of PPP1R10/PNUTS, TOX4, WDR82, and PPP1CA (or PPP1CB or PPP1CC). Post-translationally, phosphorylated on Thr-398 by PKA within the region necessary for interaction with PPP1CA. Expressed in testis, brain and intestine (at protein level). Highly expressed in testis.

It is found in the nucleus. Its subcellular location is the chromosome. Substrate-recognition component of the PNUTS-PP1 protein phosphatase complex, a protein phosphatase 1 (PP1) complex that promotes RNA polymerase II transcription pause-release, allowing transcription elongation. Promoter-proximal pausing by RNA polymerase II is a transcription halt following transcription initiation but prior to elongation, which acts as a checkpoint to control that transcripts are favorably configured for transcriptional elongation. The PNUTS-PP1 complex mediates the release of RNA polymerase II from promoter-proximal region of genes by catalyzing dephosphorylation of proteins involved in transcription, such as AFF4, CDK9, MEPCE, INTS12, NCBP1, POLR2M/GDOWN1 and SUPT6H. The PNUTS-PP1 complex also regulates RNA polymerase II transcription termination by mediating dephosphorylation of SUPT5H in termination zones downstream of poly(A) sites, thereby promoting deceleration of RNA polymerase II transcription. PNUTS-PP1 complex is also involved in the response to replication stress by mediating dephosphorylation of POLR2A at 'Ser-5' of the CTD, promoting RNA polymerase II degradation. The PNUTS-PP1 complex also plays a role in the control of chromatin structure and cell cycle progression during the transition from mitosis into interphase. PNUTS-PP1 complex mediates dephosphorylation of MYC, promoting MYC stability by preventing MYC ubiquitination by the SCF(FBXW7) complex. In addition to acts as a substrate-recognition component, PPP1R10/PNUTS also acts as a nuclear targeting subunit for the PNUTS-PP1 complex. In some context, PPP1R10/PNUTS also acts as an inhibitor of protein phosphatase 1 (PP1) activity by preventing access to substrates. This is Serine/threonine-protein phosphatase 1 regulatory subunit 10 from Rattus norvegicus (Rat).